The chain runs to 1004 residues: 2-oxoglutarate dehydrogenase E1 component (1004 aa).

This sequence belongs to the alpha-ketoglutarate dehydrogenase family. As to quaternary structure, homodimer. Part of the 2-oxoglutarate dehydrogenase (OGDH) complex composed of E1 (2-oxoglutarate dehydrogenase), E2 (dihydrolipoamide succinyltransferase) and E3 (dihydrolipoamide dehydrogenase); the complex contains multiple copies of the three enzymatic components (E1, E2 and E3). The cofactor is thiamine diphosphate.

The enzyme catalyses N(6)-[(R)-lipoyl]-L-lysyl-[protein] + 2-oxoglutarate + H(+) = N(6)-[(R)-S(8)-succinyldihydrolipoyl]-L-lysyl-[protein] + CO2. E1 component of the 2-oxoglutarate dehydrogenase (OGDH) complex which catalyzes the decarboxylation of 2-oxoglutarate, the first step in the conversion of 2-oxoglutarate to succinyl-CoA and CO(2). The protein is 2-oxoglutarate dehydrogenase E1 component of Brucella ovis (strain ATCC 25840 / 63/290 / NCTC 10512).